A 156-amino-acid chain; its full sequence is MQLIEGKLQLQGNERIAIVISRFNHIITDRLQEGAIDCFKRHGGNEKLLNLVLVPGAYELPLILDKLLESKKYDGVCVLGAIIRGGTPHFDYVSAEATKGIANTMLKYSMPVSFGVLTTDNIEQAIERAGSKAGNRGFEAMSTLIELLSLCQTLKG.

5-amino-6-(D-ribitylamino)uracil is bound by residues Phe23, 57–59, and 81–83; these read AYE and AII. 86–87 contacts (2S)-2-hydroxy-3-oxobutyl phosphate; sequence GT. Residue His89 is the Proton donor of the active site. Position 114 (Phe114) interacts with 5-amino-6-(D-ribitylamino)uracil. Arg128 lines the (2S)-2-hydroxy-3-oxobutyl phosphate pocket.

Belongs to the DMRL synthase family.

It catalyses the reaction (2S)-2-hydroxy-3-oxobutyl phosphate + 5-amino-6-(D-ribitylamino)uracil = 6,7-dimethyl-8-(1-D-ribityl)lumazine + phosphate + 2 H2O + H(+). It functions in the pathway cofactor biosynthesis; riboflavin biosynthesis; riboflavin from 2-hydroxy-3-oxobutyl phosphate and 5-amino-6-(D-ribitylamino)uracil: step 1/2. Functionally, catalyzes the formation of 6,7-dimethyl-8-ribityllumazine by condensation of 5-amino-6-(D-ribitylamino)uracil with 3,4-dihydroxy-2-butanone 4-phosphate. This is the penultimate step in the biosynthesis of riboflavin. This is 6,7-dimethyl-8-ribityllumazine synthase from Helicobacter acinonychis (strain Sheeba).